Reading from the N-terminus, the 433-residue chain is Glutamate--tRNA ligase (433 aa).

Positions 10–20 (PSPTGYLHIGG) match the 'HIGH' region motif. Positions 211 to 215 (KMSKR) match the 'KMSKS' region motif. Lys-214 lines the ATP pocket.

It belongs to the class-I aminoacyl-tRNA synthetase family. Glutamate--tRNA ligase type 1 subfamily. Monomer.

Its subcellular location is the cytoplasm. The enzyme catalyses tRNA(Glu) + L-glutamate + ATP = L-glutamyl-tRNA(Glu) + AMP + diphosphate. In terms of biological role, catalyzes the attachment of glutamate to tRNA(Glu) in a two-step reaction: glutamate is first activated by ATP to form Glu-AMP and then transferred to the acceptor end of tRNA(Glu). The sequence is that of Glutamate--tRNA ligase from Akkermansia muciniphila (strain ATCC BAA-835 / DSM 22959 / JCM 33894 / BCRC 81048 / CCUG 64013 / CIP 107961 / Muc).